The following is a 956-amino-acid chain: Calsyntenin-3 (956 aa).

An N-terminal signal peptide occupies residues Met1–Cys19. The Extracellular segment spans residues Asn20–Ala847. Cadherin domains lie at Ile29–Phe145 and Val146–Trp246. N-linked (GlcNAc...) asparagine glycans are attached at residues Asn299, Asn327, Asn347, Asn507, and Asn740. The chain crosses the membrane as a helical span at residues Ala848–Val868. Residues Arg869 to Tyr956 lie on the Cytoplasmic side of the membrane. The interval Ala917 to Tyr956 is disordered. Over residues Gln927–Val937 the composition is skewed to acidic residues. The segment covering Ser943–Tyr956 has biased composition (basic and acidic residues).

This sequence belongs to the calsyntenin family. Interacts (via cadherin domains) with both alpha and beta isoforms of neurexins (NRXN1, NRXN2 and NRXN3). Directly interacts with APBA2. Forms a tripartite complex with APBA2 and APP. Interacts with low affinity with KLC1. Interacts with SLC23A2/SVCT2. Post-translationally, proteolytically processed under normal cellular conditions. A primary zeta-cleavage generates a large extracellular (soluble) N-terminal domain (sAlc) and a short C-terminal transmembrane fragment (CTF1). A secondary cleavage catalyzed by gamma-secretase within the transmembrane domain releases the beta-Alc-beta chain in the extracellular milieu and produces an intracellular fragment (AlcICD). This processing is strongly suppressed in the tripartite complex formed with APBA2 and APP, which seems to prevent the association with gamma-secretase.

It is found in the postsynaptic cell membrane. Its subcellular location is the endoplasmic reticulum membrane. It localises to the golgi apparatus membrane. The protein localises to the cell projection. The protein resides in the dendrite. Postsynaptic adhesion molecule that binds to presynaptic neurexins to mediate both excitatory and inhibitory synapse formation. Promotes synapse development by acting as a cell adhesion molecule at the postsynaptic membrane, which associates with both neurexin-alpha and neurexin-beta proteins at the presynaptic membrane. Regulates the balance between excitatory and inhibitory synapses by inhibiting formation of excitatory parallel-fiber synapses and promoting formation of inhibitory synapses in the same neuron. May also be involved in ascorbate (vitamin C) uptake via its interaction with SLC23A2/SVCT2. Complex formation with APBA2 and APP, stabilizes APP metabolism and enhances APBA2-mediated suppression of beta-APP40 secretion, due to the retardation of intracellular APP maturation. The chain is Calsyntenin-3 (CLSTN3) from Pongo abelii (Sumatran orangutan).